The chain runs to 96 residues: Small ribosomal subunit protein uS19 (96 aa).

Belongs to the universal ribosomal protein uS19 family.

Protein S19 forms a complex with S13 that binds strongly to the 16S ribosomal RNA. The sequence is that of Small ribosomal subunit protein uS19 from Solibacter usitatus (strain Ellin6076).